Here is a 312-residue protein sequence, read N- to C-terminus: MKIDVSRLSAAVNDAHARHAQAPGGANASYIPYLAKVPSHLAGVAAVTVDGDQVVAGDADYAFAIESISKVCSLVQALEDHGPDAVREKIGADPTGLPFNSVMALALHDGKPLSPLVNAGAIATVSFLKAANAEERWKKILAMQSALAGADIALSDEVNQSEQTTNFHNRAIAWLLYSASTMYSDPMEACEVYTRQCSTLFTARHLATMAATLAAKGRNPLTGKQVLKPEHVPSVLAEMMMEGLYERSGDWAYMVGLPGKSGVGGGIMAVVPGVMGLAAFSPPLDPAGNSVRGQLMVADVARTLGLNLFDRA.

Positions 67, 118, 162, 169, 193, 245, and 263 each coordinate substrate.

Belongs to the glutaminase family. Homotetramer.

It carries out the reaction L-glutamine + H2O = L-glutamate + NH4(+). The sequence is that of Glutaminase from Bordetella avium (strain 197N).